The following is a 214-amino-acid chain: Large ribosomal subunit protein uL4 (214 aa).

Residues 43–83 (RRQAGTHKAKSRSEVNRTTKKSIKQKGSGGARHGSRNAPIF) are disordered.

This sequence belongs to the universal ribosomal protein uL4 family. Part of the 50S ribosomal subunit.

In terms of biological role, one of the primary rRNA binding proteins, this protein initially binds near the 5'-end of the 23S rRNA. It is important during the early stages of 50S assembly. It makes multiple contacts with different domains of the 23S rRNA in the assembled 50S subunit and ribosome. Its function is as follows. Forms part of the polypeptide exit tunnel. The polypeptide is Large ribosomal subunit protein uL4 (Hyphomonas neptunium (strain ATCC 15444)).